A 138-amino-acid chain; its full sequence is Putative pre-16S rRNA nuclease (138 aa).

This sequence belongs to the YqgF nuclease family.

Its subcellular location is the cytoplasm. Could be a nuclease involved in processing of the 5'-end of pre-16S rRNA. In Glaesserella parasuis serovar 5 (strain SH0165) (Haemophilus parasuis), this protein is Putative pre-16S rRNA nuclease.